The sequence spans 70 residues: MTIIRVKENEPFEVAMRRFKRTIEKNGLLTELRAREFYEKPTAERKRKKAAAVKRHYKRIRGQMLPKKLY.

This sequence belongs to the bacterial ribosomal protein bS21 family.

The sequence is that of Small ribosomal subunit protein bS21B from Burkholderia thailandensis (strain ATCC 700388 / DSM 13276 / CCUG 48851 / CIP 106301 / E264).